The primary structure comprises 284 residues: Pantothenate synthetase (284 aa).

30-37 (MGNLHDGH) is an ATP binding site. The Proton donor role is filled by H37. Position 61 (Q61) interacts with (R)-pantoate. Residue Q61 coordinates beta-alanine. 149-152 (GEKD) serves as a coordination point for ATP. Q155 lines the (R)-pantoate pocket. ATP contacts are provided by residues V178 and 186–189 (LSSR).

Belongs to the pantothenate synthetase family. Homodimer.

It is found in the cytoplasm. The catalysed reaction is (R)-pantoate + beta-alanine + ATP = (R)-pantothenate + AMP + diphosphate + H(+). It functions in the pathway cofactor biosynthesis; (R)-pantothenate biosynthesis; (R)-pantothenate from (R)-pantoate and beta-alanine: step 1/1. Its function is as follows. Catalyzes the condensation of pantoate with beta-alanine in an ATP-dependent reaction via a pantoyl-adenylate intermediate. The protein is Pantothenate synthetase of Erwinia tasmaniensis (strain DSM 17950 / CFBP 7177 / CIP 109463 / NCPPB 4357 / Et1/99).